The chain runs to 62 residues: Large ribosomal subunit protein bL28 (62 aa).

The protein belongs to the bacterial ribosomal protein bL28 family.

This is Large ribosomal subunit protein bL28 from Caldanaerobacter subterraneus subsp. tengcongensis (strain DSM 15242 / JCM 11007 / NBRC 100824 / MB4) (Thermoanaerobacter tengcongensis).